The sequence spans 714 residues: 2'-5'-oligoadenylate synthase 2 (714 aa).

A lipid anchor (N-myristoyl glycine) is attached at G2. OAS domain regions lie at residues 11–336 and 344–683; these read KPSE…SWNV and TPGH…WNVP. S397 contributes to the ATP binding site. Residues D409 and D480 each contribute to the Mg(2+) site. Residues R544 and K547 each contribute to the ATP site.

Belongs to the 2-5A synthase family. Homodimer. Requires Mg(2+) as cofactor. Myristoylation is not essential for its activity. In terms of processing, glycosylated. Glycosylation is essential for its activity.

The protein resides in the cytoplasm. It localises to the perinuclear region. The catalysed reaction is 3 ATP = 5'-triphosphoadenylyl-(2'-&gt;5')-adenylyl-(2'-&gt;5')-adenosine + 2 diphosphate. With respect to regulation, produced as a latent enzyme which is activated by double stranded RNA (dsRNA) generated during the course of viral infection. The dsRNA activator must be at least 15 nucleotides long, and no modification of the 2'-hydroxyl group is tolerated. ssRNA or dsDNA do not act as activators. Strongly inhibited by copper, iron and zinc ions. Partially inhibited by cobalt and nickel ions. In terms of biological role, interferon-induced, dsRNA-activated antiviral enzyme which plays a critical role in cellular innate antiviral response. Activated by detection of double stranded RNA (dsRNA): polymerizes higher oligomers of 2'-5'-oligoadenylates (2-5A) from ATP which then bind to the inactive monomeric form of ribonuclease L (RNASEL) leading to its dimerization and subsequent activation. Activation of RNASEL leads to degradation of cellular as well as viral RNA, resulting in the inhibition of protein synthesis, thus terminating viral replication. Can mediate the antiviral effect via the classical RNASEL-dependent pathway or an alternative antiviral pathway independent of RNASEL. In addition, it may also play a role in other cellular processes such as apoptosis, cell growth, differentiation and gene regulation. May act as a negative regulator of lactation, stopping lactation in virally infected mammary gland lobules, thereby preventing transmission of viruses to neonates. Non-infected lobules would not be affected, allowing efficient pup feeding during infection. The chain is 2'-5'-oligoadenylate synthase 2 (OAS2) from Bos taurus (Bovine).